Reading from the N-terminus, the 231-residue chain is uncharacterized protein (231 aa).

Val-10–Val-34 contributes to the NADP(+) binding site. Residue Ser-140 participates in substrate binding. Tyr-153 serves as the catalytic Proton acceptor.

The protein belongs to the short-chain dehydrogenases/reductases (SDR) family.

This is an uncharacterized protein from Staphylococcus aureus (strain MW2).